We begin with the raw amino-acid sequence, 203 residues long: MLSVLLIAEDGEWHRYKELEECLINDYHVDYSGQISTDIAELSRIEFSYEIIFFLKPVEFSEIPAISRLAKSKILVFHVLNNNVPIRLSENLLPVADCLELNASAMRGKLEYFRGVDVIKLLHPYHMEVDEECEVILNGNRNTKVLLGDITFRTGKNVVFGVRKGNMAFFSADIFSNDALKESDNCRFIKNLIKELVGKAEVY.

This is an uncharacterized protein from Archaeoglobus fulgidus (strain ATCC 49558 / DSM 4304 / JCM 9628 / NBRC 100126 / VC-16).